The following is a 324-amino-acid chain: Beta-ketoacyl-[acyl-carrier-protein] synthase III (324 aa).

Residues Cys-112 and His-249 contribute to the active site. The interval 250–254 is ACP-binding; the sequence is QANRR. The active site involves Asn-279.

The protein belongs to the thiolase-like superfamily. FabH family. As to quaternary structure, homodimer.

Its subcellular location is the cytoplasm. It carries out the reaction malonyl-[ACP] + acetyl-CoA + H(+) = 3-oxobutanoyl-[ACP] + CO2 + CoA. Its pathway is lipid metabolism; fatty acid biosynthesis. Its function is as follows. Catalyzes the condensation reaction of fatty acid synthesis by the addition to an acyl acceptor of two carbons from malonyl-ACP. Catalyzes the first condensation reaction which initiates fatty acid synthesis and may therefore play a role in governing the total rate of fatty acid production. Possesses both acetoacetyl-ACP synthase and acetyl transacylase activities. Its substrate specificity determines the biosynthesis of branched-chain and/or straight-chain of fatty acids. The polypeptide is Beta-ketoacyl-[acyl-carrier-protein] synthase III (Streptococcus pyogenes serotype M3 (strain ATCC BAA-595 / MGAS315)).